The following is a 225-amino-acid chain: Ribose-5-phosphate isomerase A (225 aa).

Positions 1–20 are disordered; that stretch reads MKQSGGTEAQKRRAGKQAAD. Residues 32–35, 86–89, and 98–101 each bind substrate; these read TGST, DGAD, and KGGG. Glu107 acts as the Proton acceptor in catalysis. Lys125 lines the substrate pocket.

Belongs to the ribose 5-phosphate isomerase family. Homodimer.

The catalysed reaction is aldehydo-D-ribose 5-phosphate = D-ribulose 5-phosphate. It participates in carbohydrate degradation; pentose phosphate pathway; D-ribose 5-phosphate from D-ribulose 5-phosphate (non-oxidative stage): step 1/1. Catalyzes the reversible conversion of ribose-5-phosphate to ribulose 5-phosphate. The protein is Ribose-5-phosphate isomerase A of Natronomonas pharaonis (strain ATCC 35678 / DSM 2160 / CIP 103997 / JCM 8858 / NBRC 14720 / NCIMB 2260 / Gabara) (Halobacterium pharaonis).